We begin with the raw amino-acid sequence, 318 residues long: Methionyl-tRNA formyltransferase (318 aa).

114-117 (SLLP) serves as a coordination point for (6S)-5,6,7,8-tetrahydrofolate.

Belongs to the Fmt family.

The enzyme catalyses L-methionyl-tRNA(fMet) + (6R)-10-formyltetrahydrofolate = N-formyl-L-methionyl-tRNA(fMet) + (6S)-5,6,7,8-tetrahydrofolate + H(+). Functionally, attaches a formyl group to the free amino group of methionyl-tRNA(fMet). The formyl group appears to play a dual role in the initiator identity of N-formylmethionyl-tRNA by promoting its recognition by IF2 and preventing the misappropriation of this tRNA by the elongation apparatus. The chain is Methionyl-tRNA formyltransferase from Protochlamydia amoebophila (strain UWE25).